Consider the following 216-residue polypeptide: GTP cyclohydrolase 1 (216 aa).

Positions 108, 111, and 179 each coordinate Zn(2+).

It belongs to the GTP cyclohydrolase I family. As to quaternary structure, homomer.

It catalyses the reaction GTP + H2O = 7,8-dihydroneopterin 3'-triphosphate + formate + H(+). Its pathway is cofactor biosynthesis; 7,8-dihydroneopterin triphosphate biosynthesis; 7,8-dihydroneopterin triphosphate from GTP: step 1/1. In Shewanella baltica (strain OS223), this protein is GTP cyclohydrolase 1.